Here is a 433-residue protein sequence, read N- to C-terminus: 26S proteasome regulatory subunit 7 (433 aa).

Residues 1 to 22 (MPDYLGADQRKTKEDEKDDKPI) are disordered. The span at 8-22 (DQRKTKEDEKDDKPI) shows a compositional bias: basic and acidic residues. Lysine 116 carries the post-translational modification N6-acetyllysine. 216–223 (GPPGTGKT) contributes to the ATP binding site. The residue at position 422 (lysine 422) is an N6-acetyllysine.

This sequence belongs to the AAA ATPase family. Component of the 19S proteasome regulatory particle complex. The 26S proteasome consists of a 20S core particle (CP) and two 19S regulatory subunits (RP). The regulatory particle is made of a lid composed of 9 subunits, a base containing 6 ATPases including PSMC2 and few additional components. Interacts with NDC80/HEC; this interaction is detected only during M phase. Interacts and SQSTM1. Interacts with PAAF1. Directly interacts with TRIM5. In terms of processing, monoubiquitinated by RNF181. Phosphorylated. Dephosphorylated by UBLCP1 which impairs PSMC2 ATPase activity and disrupts 26S proteasome assembly.

It is found in the cytoplasm. It localises to the nucleus. Functionally, component of the 26S proteasome, a multiprotein complex involved in the ATP-dependent degradation of ubiquitinated proteins. This complex plays a key role in the maintenance of protein homeostasis by removing misfolded or damaged proteins, which could impair cellular functions, and by removing proteins whose functions are no longer required. Therefore, the proteasome participates in numerous cellular processes, including cell cycle progression, apoptosis, or DNA damage repair. PSMC2 belongs to the heterohexameric ring of AAA (ATPases associated with diverse cellular activities) proteins that unfolds ubiquitinated target proteins that are concurrently translocated into a proteolytic chamber and degraded into peptides. In Pongo abelii (Sumatran orangutan), this protein is 26S proteasome regulatory subunit 7 (PSMC2).